The chain runs to 513 residues: Histidine ammonia-lyase (513 aa).

The segment at residues 143 to 145 is a cross-link (5-imidazolinone (Ala-Gly)); sequence ASG. Ser144 bears the 2,3-didehydroalanine (Ser) mark.

The protein belongs to the PAL/histidase family. Post-translationally, contains an active site 4-methylidene-imidazol-5-one (MIO), which is formed autocatalytically by cyclization and dehydration of residues Ala-Ser-Gly.

Its subcellular location is the cytoplasm. It carries out the reaction L-histidine = trans-urocanate + NH4(+). It participates in amino-acid degradation; L-histidine degradation into L-glutamate; N-formimidoyl-L-glutamate from L-histidine: step 1/3. The polypeptide is Histidine ammonia-lyase (Paracoccus denitrificans (strain Pd 1222)).